We begin with the raw amino-acid sequence, 163 residues long: Transcription antitermination protein NusB (163 aa).

It belongs to the NusB family.

In terms of biological role, involved in transcription antitermination. Required for transcription of ribosomal RNA (rRNA) genes. Binds specifically to the boxA antiterminator sequence of the ribosomal RNA (rrn) operons. The protein is Transcription antitermination protein NusB of Mycolicibacterium vanbaalenii (strain DSM 7251 / JCM 13017 / BCRC 16820 / KCTC 9966 / NRRL B-24157 / PYR-1) (Mycobacterium vanbaalenii).